A 142-amino-acid chain; its full sequence is Large ribosomal subunit protein uL13 (142 aa).

Belongs to the universal ribosomal protein uL13 family. Part of the 50S ribosomal subunit.

In terms of biological role, this protein is one of the early assembly proteins of the 50S ribosomal subunit, although it is not seen to bind rRNA by itself. It is important during the early stages of 50S assembly. This Acidovorax sp. (strain JS42) protein is Large ribosomal subunit protein uL13.